The chain runs to 261 residues: ATP synthase subunit a (261 aa).

5 helical membrane-spanning segments follow: residues 28 to 48, 89 to 109, 140 to 160, 203 to 223, and 229 to 249; these read AVHL…LTIF, IAPL…MDWV, NITF…SIKV, LFGN…IGVF, and FLWA…FMML.

It belongs to the ATPase A chain family. F-type ATPases have 2 components, CF(1) - the catalytic core - and CF(0) - the membrane proton channel. CF(1) has five subunits: alpha(3), beta(3), gamma(1), delta(1), epsilon(1). CF(0) has three main subunits: a(1), b(2) and c(9-12). The alpha and beta chains form an alternating ring which encloses part of the gamma chain. CF(1) is attached to CF(0) by a central stalk formed by the gamma and epsilon chains, while a peripheral stalk is formed by the delta and b chains.

It is found in the cell inner membrane. Functionally, key component of the proton channel; it plays a direct role in the translocation of protons across the membrane. The chain is ATP synthase subunit a from Colwellia psychrerythraea (strain 34H / ATCC BAA-681) (Vibrio psychroerythus).